The sequence spans 509 residues: Dye-decolorizing peroxidase AauDyP1 (509 aa).

The N-terminal stretch at 1–22 is a signal peptide; it reads MRLSPVFVALLSGLLAADLGLA. Positions 23-61 are excised as a propeptide; it reads RSVAPRVADSPAAVTGTRKTSLLKNVAGLPPVPSAAQVA. Asp-229 serves as the catalytic Proton acceptor. Residue Asn-343 is glycosylated (N-linked (GlcNAc...) asparagine). Residue His-365 coordinates heme. N-linked (GlcNAc...) asparagine glycosylation is found at Asn-383, Asn-410, and Asn-476.

The protein belongs to the DyP-type peroxidase family. Requires heme b as cofactor.

Its subcellular location is the secreted. The enzyme catalyses Reactive Blue 5 + 2 H2O2 = 2,2'-disulfonyl azobenzene + 3-[(4-amino-6-chloro-1,3,5-triazin-2-yl)amino]benzenesulfonate + phthalate + 2 H2O + 2 H(+). It carries out the reaction 2 a phenolic donor + H2O2 = 2 a phenolic radical donor + 2 H2O. Its activity is regulated as follows. Inhibited by imidazole. In terms of biological role, manganese-independent peroxidase that is able to convert a large number of compounds, but its physiological substrate is not known. In addition to classic peroxidase substrates (e.g. 2,6-dimethoxyphenol), oxidizes dyes such as Reactive Blue 5 and Reactive Black 5. This Auricularia auricula-judae (Judas ear fungus) protein is Dye-decolorizing peroxidase AauDyP1.